A 291-amino-acid polypeptide reads, in one-letter code: MVTKRVQRMMFAAAACIPLLLGSAPLYAQTSAVQQKLAALEKSSGGRLGVALIDTADNTQVLYRGDERFPMCSTSKVMAAAAVLKQSETQKQLLNQPVEIKPADLVNYNPIAEKHVNGTMTLAELSAAALQYSDNTAMNKLIAQLGGPGGVTAFARAIGDETFRLDRTEPTLNTAIPGDPRDTTTPRAMAQTLRQLTLGHALGETQRAQLVTWLKGNTTGAASIRAGLPTSWTVGDKTGSGDYGTTNDIAVIWPQGRAPLVLVTYFTQPQQNAESRRDVLASAARIIAEGL.

Residues methionine 1–alanine 28 form the signal peptide. Residue serine 73 is the Nucleophile; acyl-ester intermediate of the active site. A beta-lactam contacts are provided by lysine 76, serine 133, glutamate 169, and serine 240.

Belongs to the class-A beta-lactamase family. In terms of assembly, monomer.

It localises to the secreted. The catalysed reaction is a beta-lactam + H2O = a substituted beta-amino acid. Inhibited by the beta-lactamase-blocking agents clavulanic acid, tazobactam and sulbactam. Its function is as follows. Extended-spectrum beta-lactamase (ESBL) which confers resistance to penicillins, as well as first, second, and third-generation cephalosporins. Has cefotaxime-hydrolyzing activity. In Escherichia coli, this protein is Beta-lactamase CTX-M-14.